The following is a 93-amino-acid chain: Corticostatin 1 (93 aa).

The signal sequence occupies residues 1–19; that stretch reads MRTLILLAAILLAALQAQA. Residues 20-59 constitute a propeptide that is removed on maturation; the sequence is ELFSVNVDEVLDQQQPGSDQDLVIHLTGEESSALQVPDTK. 3 cysteine pairs are disulfide-bonded: cysteine 62–cysteine 90, cysteine 64–cysteine 79, and cysteine 69–cysteine 89.

The protein belongs to the alpha-defensin family.

It localises to the secreted. In terms of biological role, microbicidal activity and inhibits corticotropin (ACTH) stimulated corticosterone production. In Oryctolagus cuniculus (Rabbit), this protein is Corticostatin 1.